A 61-amino-acid polypeptide reads, in one-letter code: Small ribosomal subunit protein uS14 (61 aa).

Residues cysteine 24, cysteine 27, cysteine 40, and cysteine 43 each contribute to the Zn(2+) site.

Belongs to the universal ribosomal protein uS14 family. Zinc-binding uS14 subfamily. Part of the 30S ribosomal subunit. Contacts proteins S3 and S10. The cofactor is Zn(2+).

Binds 16S rRNA, required for the assembly of 30S particles and may also be responsible for determining the conformation of the 16S rRNA at the A site. This is Small ribosomal subunit protein uS14 from Oleidesulfovibrio alaskensis (strain ATCC BAA-1058 / DSM 17464 / G20) (Desulfovibrio alaskensis).